Here is a 448-residue protein sequence, read N- to C-terminus: Rhodopsin (448 aa).

At 2–33 (GRDLRDNETWWYNPSIVVHPHWREFDQVPDAV) the chain is on the extracellular side. Residue asparagine 8 is glycosylated (N-linked (GlcNAc...) asparagine). The helical transmembrane segment at 34–58 (YYSLGIFIGICGIIGCGGNGIVIYL) threads the bilayer. At 59–70 (FTKTKSLQTPAN) the chain is on the cytoplasmic side. The chain crosses the membrane as a helical span at residues 71–97 (MFIINLAFSDFTFSLVNGFPLMTISCF). At 98–109 (LKKWIFGFAACK) the chain is on the extracellular side. A disulfide bond links cysteine 108 and cysteine 186. The chain crosses the membrane as a helical span at residues 110–131 (VYGFIGGIFGFMSIMTMAMISI). The Cytoplasmic segment spans residues 132–151 (DRYNVIGRPMAASKKMSHRR). Residues 152-172 (AFIMIIFVWLWSVLWAIGPIF) traverse the membrane as a helical segment. At 173–199 (GWGAYTLEGVLCNCSFDYISRDSTTRS) the chain is on the extracellular side. The helical transmembrane segment at 200-224 (NILCMFILGFFGPILIIFFCYFNIV) threads the bilayer. The Cytoplasmic portion of the chain corresponds to 225-261 (MSVSNHEKEMAAMAKRLNAKELRKAQAGANAEMRLAK). The helical transmembrane segment at 262–283 (ISIVIVSQFLLSWSPYAVVALL) threads the bilayer. At 284-293 (AQFGPLEWVT) the chain is on the extracellular side. A helical membrane pass occupies residues 294-315 (PYAAQLPVMFAKASAIHNPMIY). An N6-(retinylidene)lysine modification is found at lysine 305. Residues 316-448 (SVSHPKFREA…QGVDNQAYQA (133 aa)) are Cytoplasmic-facing. Residues cysteine 336 and cysteine 337 are each lipidated (S-palmitoyl cysteine). Acidic residues predominate over residues 343 to 352 (ETEDDKDAET). The disordered stretch occupies residues 343–448 (ETEDDKDAET…QGVDNQAYQA (106 aa)). Residues 359 to 391 (SSDAAPSADAAQMKEMMAMMQKMQQQQAAYPPQ) are compositionally biased toward low complexity. A compositionally biased stretch (pro residues) spans 392–437 (GYAPPPQGYPPQGYPPQGYPPQGYPPQGYPPPPQGAPPQGAPPAAP).

It belongs to the G-protein coupled receptor 1 family. Opsin subfamily. Contains one covalently linked retinal chromophore. Upon light absorption, the covalently bound 11-cis-retinal is converted to all-trans-retinal. After hydrolysis of the Schiff base and release of the covalently bound all-trans-retinal, active rhodopsin is regenerated by binding of a fresh molecule of 11-cis-retinal. Retina, rhabdomere membrane of photoreceptor cells (at protein level).

The protein resides in the cell projection. Its subcellular location is the rhabdomere membrane. Functionally, photoreceptor required for image-forming vision at low light intensity. Light-induced isomerization of 11-cis to all-trans retinal triggers a conformational change that activates signaling via G-proteins. Signaling mediates the activation of phospholipase C. Subsequent receptor phosphorylation mediates displacement of the bound G-protein alpha subunit by arrestin and terminates signaling. The polypeptide is Rhodopsin (RHO) (Todarodes pacificus (Japanese flying squid)).